The chain runs to 1058 residues: Ubiquitin-like modifier-activating enzyme 1 (1058 aa).

Positions 1 to 47 are disordered; that stretch reads MSSSPLSKKRRVSGPDPKPGSNCSPAQSVLSEVPSVPTNGMAKNGSE. At serine 2 the chain carries N-acetylserine. Serine 2 bears the N-acetylalanine mark. Serine 4 carries the post-translational modification Phosphoserine. The Nuclear localization signal motif lies at 5-11; it reads PLSKKRR. 4 positions are modified to phosphoserine: serine 13, serine 21, serine 24, and serine 46. The segment covering 21–30 has biased composition (polar residues); the sequence is SNCSPAQSVL. Position 55 is a phosphotyrosine (tyrosine 55). Repeat copies occupy residues 63–199 and 459–611. Residues 63 to 611 are 2 approximate repeats; it reads GHEAMKRLQT…GTKGNVQVVI (549 aa). Residues alanine 478, aspartate 504, arginine 515, lysine 528, and 576–577 each bind ATP; that span reads DN. An N6-succinyllysine modification is found at lysine 528. The active-site Glycyl thioester intermediate is the cysteine 632. N6-acetyllysine is present on lysine 671. At threonine 800 the chain carries Phosphothreonine. Phosphoserine is present on residues serine 810, serine 816, serine 820, and serine 835. Lysine 980 carries the post-translational modification N6-acetyllysine.

Belongs to the ubiquitin-activating E1 family. In terms of assembly, monomer. Interacts with GAN (via BTB domain). Post-translationally, ISGylated. In terms of tissue distribution, detected in erythrocytes (at protein level). Ubiquitous.

It is found in the cytoplasm. Its subcellular location is the mitochondrion. It localises to the nucleus. The catalysed reaction is ATP + ubiquitin + [E1 ubiquitin-activating enzyme]-L-cysteine = AMP + diphosphate + S-ubiquitinyl-[E1 ubiquitin-activating enzyme]-L-cysteine.. Its pathway is protein modification; protein ubiquitination. Catalyzes the first step in ubiquitin conjugation to mark cellular proteins for degradation through the ubiquitin-proteasome system. Activates ubiquitin by first adenylating its C-terminal glycine residue with ATP, and thereafter linking this residue to the side chain of a cysteine residue in E1, yielding a ubiquitin-E1 thioester and free AMP. Essential for the formation of radiation-induced foci, timely DNA repair and for response to replication stress. Promotes the recruitment of TP53BP1 and BRCA1 at DNA damage sites. This chain is Ubiquitin-like modifier-activating enzyme 1 (UBA1), found in Homo sapiens (Human).